A 121-amino-acid chain; its full sequence is Putative iron-sulfur cluster insertion protein ErpA (121 aa).

Iron-sulfur cluster contacts are provided by C49, C113, and C115.

Belongs to the HesB/IscA family. Homodimer. It depends on iron-sulfur cluster as a cofactor.

Required for insertion of 4Fe-4S clusters. In Polaromonas sp. (strain JS666 / ATCC BAA-500), this protein is Putative iron-sulfur cluster insertion protein ErpA.